A 304-amino-acid chain; its full sequence is Protoheme IX farnesyltransferase 1 (304 aa).

A run of 8 helical transmembrane segments spans residues 24 to 44, 47 to 67, 99 to 119, 122 to 142, 150 to 170, 176 to 196, 228 to 248, and 280 to 300; these read VVVLMLITSLIGMLLATKAPL, FVPWQVLIFGNLGIGLCAGAA, MALGFALLLALAGMAVLLAFT, LTAWLTLASLLGYAALYTGFL, IVIGGLAGAAPPLLGWVAITG, PLLLVLIIFAWTPPHFWALCI, LVLFAVSLMPFVIHMSGLVYL, and YSIVYLFLLFMALLVDHYLPL.

Belongs to the UbiA prenyltransferase family. Protoheme IX farnesyltransferase subfamily.

The protein resides in the cell inner membrane. The enzyme catalyses heme b + (2E,6E)-farnesyl diphosphate + H2O = Fe(II)-heme o + diphosphate. It functions in the pathway porphyrin-containing compound metabolism; heme O biosynthesis; heme O from protoheme: step 1/1. Converts heme B (protoheme IX) to heme O by substitution of the vinyl group on carbon 2 of heme B porphyrin ring with a hydroxyethyl farnesyl side group. The polypeptide is Protoheme IX farnesyltransferase 1 (Pseudomonas aeruginosa (strain UCBPP-PA14)).